A 37-amino-acid polypeptide reads, in one-letter code: Large ribosomal subunit protein bL36c (37 aa).

The protein belongs to the bacterial ribosomal protein bL36 family.

It is found in the plastid. The polypeptide is Large ribosomal subunit protein bL36c (Cuscuta reflexa (Southern Asian dodder)).